Consider the following 85-residue polypeptide: Acyl carrier protein (85 aa).

In terms of domain architecture, Carrier spans 4-79 (DELFEKVKEI…NAVNLLSEKL (76 aa)). The residue at position 39 (serine 39) is an O-(pantetheine 4'-phosphoryl)serine.

The protein belongs to the acyl carrier protein (ACP) family. Post-translationally, 4'-phosphopantetheine is transferred from CoA to a specific serine of apo-ACP by AcpS. This modification is essential for activity because fatty acids are bound in thioester linkage to the sulfhydryl of the prosthetic group.

It localises to the cytoplasm. It functions in the pathway lipid metabolism; fatty acid biosynthesis. Its function is as follows. Carrier of the growing fatty acid chain in fatty acid biosynthesis. In Petrotoga mobilis (strain DSM 10674 / SJ95), this protein is Acyl carrier protein.